A 68-amino-acid chain; its full sequence is Translational regulator CsrA 1 (68 aa).

The protein belongs to the CsrA/RsmA family. As to quaternary structure, homodimer; the beta-strands of each monomer intercalate to form a hydrophobic core, while the alpha-helices form wings that extend away from the core.

It localises to the cytoplasm. Its function is as follows. A key translational regulator that binds mRNA to regulate translation initiation and/or mRNA stability. Mediates global changes in gene expression, shifting from rapid growth to stress survival by linking envelope stress, the stringent response and the catabolite repression systems. Usually binds in the 5'-UTR; binding at or near the Shine-Dalgarno sequence prevents ribosome-binding, repressing translation, binding elsewhere in the 5'-UTR can activate translation and/or stabilize the mRNA. Its function is antagonized by small RNA(s). The protein is Translational regulator CsrA 1 of Coxiella burnetii (strain RSA 493 / Nine Mile phase I).